Reading from the N-terminus, the 95-residue chain is Co-chaperonin GroES (95 aa).

This sequence belongs to the GroES chaperonin family. Heptamer of 7 subunits arranged in a ring. Interacts with the chaperonin GroEL.

The protein localises to the cytoplasm. Its function is as follows. Together with the chaperonin GroEL, plays an essential role in assisting protein folding. The GroEL-GroES system forms a nano-cage that allows encapsulation of the non-native substrate proteins and provides a physical environment optimized to promote and accelerate protein folding. GroES binds to the apical surface of the GroEL ring, thereby capping the opening of the GroEL channel. In Neisseria meningitidis serogroup C (strain 053442), this protein is Co-chaperonin GroES.